The primary structure comprises 105 residues: U2-lycotoxin-Ls1a (105 aa).

A signal peptide spans 1 to 17 (MIKYVLISALLVVAVYS). Positions 18 to 41 (FTIEDNEDALLEEAEDELDTEEER) are excised as a propeptide. Intrachain disulfides connect Cys51–Cys67, Cys58–Cys97, Cys60–Cys83, and Cys69–Cys81.

It belongs to the neurotoxin 04 (omega-agtx) family. 01 (type I omega-agtx) subfamily. In terms of tissue distribution, expressed by the venom gland.

Its subcellular location is the secreted. Functionally, insecticidal to house crickets. It induces an excitatory slow-onset impact that leads to irreversible spastic paralysis. It also modifies human voltage-gated potassium channel Kv1.5/KCNA5. Most likely, it binds to the voltage-sensing domain of the channel, suggesting it does not block the pore but prevents its opening at physiological membrane potentials. The recombinant peptide binds to the channel in an irreversible manner and slows down the hKv1.5 current activation kinetics. It is not toxic to mice, when intracranially injected (at 0.5 ug/g mouse). The protein is U2-lycotoxin-Ls1a of Lycosa singoriensis (Wolf spider).